A 172-amino-acid polypeptide reads, in one-letter code: Large ribosomal subunit protein eL20 (172 aa).

It belongs to the eukaryotic ribosomal protein eL20 family. As to quaternary structure, component of the large ribosomal subunit. Mature ribosomes consist of a small (40S) and a large (60S) subunit. The 40S subunit contains about 32 different proteins and 1 molecule of RNA (18S). The 60S subunit contains 45 different proteins and 3 molecules of RNA (25S, 5.8S and 5S).

It localises to the cytoplasm. Functionally, component of the ribosome, a large ribonucleoprotein complex responsible for the synthesis of proteins in the cell. The small ribosomal subunit (SSU) binds messenger RNAs (mRNAs) and translates the encoded message by selecting cognate aminoacyl-transfer RNA (tRNA) molecules. The large subunit (LSU) contains the ribosomal catalytic site termed the peptidyl transferase center (PTC), which catalyzes the formation of peptide bonds, thereby polymerizing the amino acids delivered by tRNAs into a polypeptide chain. The nascent polypeptides leave the ribosome through a tunnel in the LSU and interact with protein factors that function in enzymatic processing, targeting, and the membrane insertion of nascent chains at the exit of the ribosomal tunnel. The polypeptide is Large ribosomal subunit protein eL20 (Candida albicans (strain SC5314 / ATCC MYA-2876) (Yeast)).